The following is a 164-amino-acid chain: Peptidyl-prolyl cis-trans isomerase CYP18-2 (164 aa).

In terms of domain architecture, PPIase cyclophilin-type spans 12–162 (VTLETSMGPF…HEVKILRTKV (151 aa)).

The protein belongs to the cyclophilin-type PPIase family. Ubiquitous.

It is found in the cytoplasm. It catalyses the reaction [protein]-peptidylproline (omega=180) = [protein]-peptidylproline (omega=0). In terms of biological role, PPIases accelerate the folding of proteins. It catalyzes the cis-trans isomerization of proline imidic peptide bonds in oligopeptides. The chain is Peptidyl-prolyl cis-trans isomerase CYP18-2 (CYP18-2) from Arabidopsis thaliana (Mouse-ear cress).